Here is a 263-residue protein sequence, read N- to C-terminus: Endonuclease 8 (263 aa).

P2 acts as the Schiff-base intermediate with DNA in catalysis. E3 (proton donor) is an active-site residue. The active-site Proton donor; for beta-elimination activity is the K53. Residues Q70, R125, and N169 each contribute to the DNA site. The segment at 229 to 263 (KVFHRDGELCERCGGIIEKTTLSSRPFYWCPGCQH) adopts an FPG-type zinc-finger fold. The Proton donor; for delta-elimination activity role is filled by R253.

The protein belongs to the FPG family. The cofactor is Zn(2+).

The catalysed reaction is 2'-deoxyribonucleotide-(2'-deoxyribose 5'-phosphate)-2'-deoxyribonucleotide-DNA = a 3'-end 2'-deoxyribonucleotide-(2,3-dehydro-2,3-deoxyribose 5'-phosphate)-DNA + a 5'-end 5'-phospho-2'-deoxyribonucleoside-DNA + H(+). Functionally, involved in base excision repair of DNA damaged by oxidation or by mutagenic agents. Acts as a DNA glycosylase that recognizes and removes damaged bases. Has a preference for oxidized pyrimidines, such as thymine glycol, 5,6-dihydrouracil and 5,6-dihydrothymine. Has AP (apurinic/apyrimidinic) lyase activity and introduces nicks in the DNA strand. Cleaves the DNA backbone by beta-delta elimination to generate a single-strand break at the site of the removed base with both 3'- and 5'-phosphates. The protein is Endonuclease 8 of Escherichia coli (strain SE11).